A 127-amino-acid chain; its full sequence is Large ribosomal subunit protein bL12 (127 aa).

The disordered stretch occupies residues 101-127 (VKTGVSKEEAEDAKKQLVESGAEVEIK). Over residues 105 to 117 (VSKEEAEDAKKQL) the composition is skewed to basic and acidic residues.

This sequence belongs to the bacterial ribosomal protein bL12 family. In terms of assembly, homodimer. Part of the ribosomal stalk of the 50S ribosomal subunit. Forms a multimeric L10(L12)X complex, where L10 forms an elongated spine to which 2 to 4 L12 dimers bind in a sequential fashion. Binds GTP-bound translation factors.

Its function is as follows. Forms part of the ribosomal stalk which helps the ribosome interact with GTP-bound translation factors. Is thus essential for accurate translation. The polypeptide is Large ribosomal subunit protein bL12 (Geobacter metallireducens (strain ATCC 53774 / DSM 7210 / GS-15)).